We begin with the raw amino-acid sequence, 109 residues long: Globin (109 aa).

The region spanning 3–109 (PLTAAEVSSL…IFPIAGIHAL (107 aa)) is the Globin domain.

The protein belongs to the globin family. In terms of assembly, monomer.

Oxygen binding protein. In Dicrocoelium dendriticum (Small liver fluke), this protein is Globin.